The chain runs to 68 residues: Protein SlyX homolog (68 aa).

Belongs to the SlyX family.

In Pseudomonas fluorescens (strain SBW25), this protein is Protein SlyX homolog.